The primary structure comprises 231 residues: ATP phosphoribosyltransferase (231 aa).

Belongs to the ATP phosphoribosyltransferase family. Short subfamily. In terms of assembly, heteromultimer composed of HisG and HisZ subunits.

The protein resides in the cytoplasm. The catalysed reaction is 1-(5-phospho-beta-D-ribosyl)-ATP + diphosphate = 5-phospho-alpha-D-ribose 1-diphosphate + ATP. It participates in amino-acid biosynthesis; L-histidine biosynthesis; L-histidine from 5-phospho-alpha-D-ribose 1-diphosphate: step 1/9. In terms of biological role, catalyzes the condensation of ATP and 5-phosphoribose 1-diphosphate to form N'-(5'-phosphoribosyl)-ATP (PR-ATP). Has a crucial role in the pathway because the rate of histidine biosynthesis seems to be controlled primarily by regulation of HisG enzymatic activity. In Rhizobium meliloti (strain 1021) (Ensifer meliloti), this protein is ATP phosphoribosyltransferase (hisG).